The following is a 556-amino-acid chain: Formate--tetrahydrofolate ligase (556 aa).

65 to 72 (TPAGEGKS) is a binding site for ATP.

The protein belongs to the formate--tetrahydrofolate ligase family.

It carries out the reaction (6S)-5,6,7,8-tetrahydrofolate + formate + ATP = (6R)-10-formyltetrahydrofolate + ADP + phosphate. The protein operates within one-carbon metabolism; tetrahydrofolate interconversion. The polypeptide is Formate--tetrahydrofolate ligase (Clostridium beijerinckii (strain ATCC 51743 / NCIMB 8052) (Clostridium acetobutylicum)).